The sequence spans 286 residues: Bifunctional protein FolD (286 aa).

Residues glycine 166–serine 168 and isoleucine 232 contribute to the NADP(+) site.

The protein belongs to the tetrahydrofolate dehydrogenase/cyclohydrolase family. As to quaternary structure, homodimer.

It catalyses the reaction (6R)-5,10-methylene-5,6,7,8-tetrahydrofolate + NADP(+) = (6R)-5,10-methenyltetrahydrofolate + NADPH. It carries out the reaction (6R)-5,10-methenyltetrahydrofolate + H2O = (6R)-10-formyltetrahydrofolate + H(+). The protein operates within one-carbon metabolism; tetrahydrofolate interconversion. Its function is as follows. Catalyzes the oxidation of 5,10-methylenetetrahydrofolate to 5,10-methenyltetrahydrofolate and then the hydrolysis of 5,10-methenyltetrahydrofolate to 10-formyltetrahydrofolate. The polypeptide is Bifunctional protein FolD (Shewanella piezotolerans (strain WP3 / JCM 13877)).